The chain runs to 316 residues: Apolipoprotein E (316 aa).

The signal sequence occupies residues 1–18 (MKVLWVAVVVALLAGCQA). 8 consecutive repeat copies span residues 79 to 100 (ALMEETMKEVKAYKEELEGQLG), 101 to 122 (PMAQETQARVSKELQAAQARLG), 123 to 144 (SDMEDLRNRLAQYRSEVQAMLG), 145 to 166 (QSTEELRARMASHLRKLRKRLL), 167 to 188 (RDADDLKKRLAVYQAGASEGAE), 189 to 210 (RSLSAVRERFGPLVEQGQSRAA), 211 to 232 (TLSTLAGQPLLERAEAWRQKLH), and 233 to 254 (GRLEEVGVRAQDRLDKIRQQLE). The interval 79–254 (ALMEETMKEV…RLDKIRQQLE (176 aa)) is 8 X 22 AA approximate tandem repeats. The residue at position 142 (Met-142) is a Methionine sulfoxide. Ser-146 carries the post-translational modification Phosphoserine; by FAM20C. Residues 157–167 (HLRKLRKRLLR) form an LDL and other lipoprotein receptors binding region. 161 to 164 (LRKR) provides a ligand contact to heparin. The lipid-binding and lipoprotein association stretch occupies residues 209–289 (AATLSTLAGQ…SWFEPLVEDM (81 aa)). A glycan (O-linked (GalNAc...) threonine) is linked at Thr-211. Position 228–235 (228–235 (RQKLHGRL)) interacts with heparin. Residues 265–316 (NQMRLQAEAFQARLRSWFEPLVEDMQRQWAGLVEKVQLALRPSPTSPPSENH) form a homooligomerization region. Positions 277–289 (RLRSWFEPLVEDM) are specificity for association with VLDL.

Belongs to the apolipoprotein A1/A4/E family. Homotetramer. May interact with ABCA1; functionally associated with ABCA1 in the biogenesis of HDLs. May interact with APP/A4 amyloid-beta peptide; the interaction is extremely stable in vitro but its physiological significance is unclear. May interact with MAPT. May interact with MAP2. In the cerebrospinal fluid, interacts with secreted SORL1. Interacts with PMEL; this allows the loading of PMEL luminal fragment on ILVs to induce fibril nucleation. Post-translationally, APOE exists as multiple glycosylated and sialylated glycoforms within cells and in plasma. The extent of glycosylation and sialylation are tissue and context specific. Glycated in plasma VLDL. In terms of processing, phosphorylated by FAM20C in the extracellular medium.

It is found in the secreted. Its subcellular location is the extracellular space. The protein localises to the extracellular matrix. It localises to the extracellular vesicle. The protein resides in the endosome. It is found in the multivesicular body. In terms of biological role, APOE is an apolipoprotein, a protein associating with lipid particles, that mainly functions in lipoprotein-mediated lipid transport between organs via the plasma and interstitial fluids. APOE is a core component of plasma lipoproteins and is involved in their production, conversion and clearance. Apolipoproteins are amphipathic molecules that interact both with lipids of the lipoprotein particle core and the aqueous environment of the plasma. As such, APOE associates with chylomicrons, chylomicron remnants, very low density lipoproteins (VLDL) and intermediate density lipoproteins (IDL) but shows a preferential binding to high-density lipoproteins (HDL). It also binds a wide range of cellular receptors including the LDL receptor/LDLR and the very low-density lipoprotein receptor/VLDLR that mediate the cellular uptake of the APOE-containing lipoprotein particles. Finally, APOE also has a heparin-binding activity and binds heparan-sulfate proteoglycans on the surface of cells, a property that supports the capture and the receptor-mediated uptake of APOE-containing lipoproteins by cells. This Bos mutus grunniens (Wild yak) protein is Apolipoprotein E (APOE).